A 378-amino-acid polypeptide reads, in one-letter code: Probable cytochrome oxidase subunit 2 (378 aa).

Over 1 to 8 the chain is Cytoplasmic; the sequence is MIDYEFLR. A helical transmembrane segment spans residues 9 to 28; that stretch reads FIWWVLVIVLLIGFSVTDGF. The Periplasmic segment spans residues 29–79; the sequence is DMGVTALLPVIGKKEVERRIMINTIAPHWDGNQVWLLTAGGAIFAAWPIVY. Residues 80 to 99 form a helical membrane-spanning segment; the sequence is AVSFSGFYIALVLVLAALFL. The Cytoplasmic portion of the chain corresponds to 100–122; it reads RPLGFEYRAKIDNPTWRSVWDWG. Residues 123 to 142 form a helical membrane-spanning segment; the sequence is LFAGGFVPALVFGVAFGNLL. Topologically, residues 143–164 are periplasmic; the sequence is QGVPFHFNELTQVTYTGSFFEL. Residues 165 to 184 traverse the membrane as a helical segment; sequence LNPFALLCGVISLSMLVTHG. The Cytoplasmic portion of the chain corresponds to 185–205; the sequence is ANWLQMKTTEALRDRARTVSQ. A helical transmembrane segment spans residues 206 to 224; it reads IGSIVTLIAFVLAGVWLYS. At 225-261 the chain is on the periplasmic side; the sequence is KDGYVVTSTIDHFAPSSPMNKEVAVETGAWFRNFNEM. A helical membrane pass occupies residues 262–281; sequence PILWIFPALAVVAALLNAAF. The Cytoplasmic segment spans residues 282-291; the sequence is SKANRCGFAF. A helical membrane pass occupies residues 292–311; it reads FFSALTMAGVIITAAVSMFP. The Periplasmic segment spans residues 312–335; it reads FVMPSSSHPEQSLLMWDSTSSELT. The chain crosses the membrane as a helical span at residues 336-355; it reads LTLMLIFAVVFVVIALAYTI. The Cytoplasmic portion of the chain corresponds to 356–378; that stretch reads WSYSKMFGRLDANFIDKNKHSLY.

Belongs to the cytochrome ubiquinol oxidase subunit 2 family. In terms of assembly, heterodimer of subunits I and II.

The protein resides in the cell inner membrane. Functionally, probable cytochrome oxidase subunit. This is Probable cytochrome oxidase subunit 2 from Haemophilus influenzae (strain ATCC 51907 / DSM 11121 / KW20 / Rd).